The primary structure comprises 294 residues: Foldase protein PrsA 1 (294 aa).

The signal sequence occupies residues 1–21 (MTKLKKVMISLVAATLLLLAG). Cys22 is lipidated: N-palmitoyl cysteine. Cys22 is lipidated: S-diacylglycerol cysteine. The PpiC domain maps to 135 to 226 (EPNITVRHIL…YGYHLIQLVK (92 aa)).

The protein belongs to the PrsA family.

Its subcellular location is the cell membrane. It catalyses the reaction [protein]-peptidylproline (omega=180) = [protein]-peptidylproline (omega=0). Plays a major role in protein secretion by helping the post-translocational extracellular folding of several secreted proteins. This Listeria innocua serovar 6a (strain ATCC BAA-680 / CLIP 11262) protein is Foldase protein PrsA 1 (prsA1).